The primary structure comprises 824 residues: Mucosa-associated lymphoid tissue lymphoma translocation protein 1 (824 aa).

The disordered stretch occupies residues 1 to 27 (MSLLGDPLQALPPSAAPTGPLLAPPAG). Ser2 is modified (N-acetylserine). Low complexity predominate over residues 11 to 27 (LPPSAAPTGPLLAPPAG). One can recognise a Death domain in the interval 39–126 (RRLSELLDQA…EVLQLLSPPG (88 aa)). 2 Ig-like C2-type domains span residues 125 to 201 (PGIK…FEFS) and 212 to 305 (PESF…KKVE). Ser135 carries the post-translational modification Phosphoserine. Cystine bridges form between Cys147–Cys190 and Cys248–Cys290. The interval 348–562 (IGNMNYREHP…SLSEKRALTD (215 aa)) is caspase-like. A Nuclear export signal motif is present at residues 369–376 (LTNLLRQL). Residues His415 and Cys464 contribute to the active site.

The protein belongs to the peptidase C14B family. Homooligomer; forms oligomers which bind to TRAF6. Forms a complex with CARD14 and MALT1; resulting in the formation of a CBM (CARD14-BCL10-MALT1) complex. Forms a complex with CARD11 and MALT1; resulting in the formation of a CBM (CARD11-BCL10-MALT1) complex. Forms a complex with CARD9 and MALT1; resulting in the formation of a CBM (CARD9-BCL10-MALT1) complex. As to expression, highly expressed in peripheral blood mononuclear cells. Detected at lower levels in bone marrow, thymus and lymph node, and at very low levels in colon and lung.

The protein resides in the cytoplasm. Its subcellular location is the perinuclear region. The protein localises to the nucleus. Functionally, protease that enhances BCL10-induced activation: acts via formation of CBM complexes that channel adaptive and innate immune signaling downstream of CARD domain-containing proteins (CARD9, CARD11 and CARD14) to activate NF-kappa-B and MAP kinase p38 pathways which stimulate expression of genes encoding pro-inflammatory cytokines and chemokines. Mediates BCL10 cleavage: MALT1-dependent BCL10 cleavage plays an important role in T-cell antigen receptor-induced integrin adhesion. Involved in the induction of T helper 17 cells (Th17) differentiation. Cleaves RC3H1 and ZC3H12A in response to T-cell receptor (TCR) stimulation which releases their cooperatively repressed targets to promote Th17 cell differentiation. Also mediates cleavage of N4BP1 in T-cells following TCR-mediated activation, leading to N4BP1 inactivation. May also have ubiquitin ligase activity: binds to TRAF6, inducing TRAF6 oligomerization and activation of its ligase activity. The protein is Mucosa-associated lymphoid tissue lymphoma translocation protein 1 of Homo sapiens (Human).